Consider the following 520-residue polypeptide: Cryptochrome DASH (520 aa).

A Photolyase/cryptochrome alpha/beta domain is found at 5–141 (RTVICLLRND…RVQTFWGSTL (137 aa)). Residues 479–504 (SRHVNNKSSGPSSSKGRKGSSYTARQ) are disordered.

Belongs to the DNA photolyase class-1 family. FAD serves as cofactor. Requires (6R)-5,10-methylene-5,6,7,8-tetrahydrofolate as cofactor.

Its function is as follows. May have a photoreceptor function. Has weak cyclobutyl pyrimidine photolyase activity when expressed in E.coli and when tested in vitro. In Danio rerio (Zebrafish), this protein is Cryptochrome DASH (cry-dash).